Reading from the N-terminus, the 652-residue chain is Vitrin (652 aa).

The first 26 residues, 1-26 (MGIVVLTMKASVIEMFLVLLVTGIQS), serve as a signal peptide directing secretion. An LCCL domain is found at 40 to 133 (TVPQISCDVR…LSLPRWRESF (94 aa)). 2 cysteine pairs are disulfide-bonded: Cys-46–Cys-62 and Cys-66–Cys-86. Disordered stretches follow at residues 137–181 (EGKP…AAQP) and 196–231 (THTTLPKPSPSAGSTASGLRPQPAGQRSKDLGEPAL). Residues 145 to 158 (TYPSSLTYSSSKSP) show a composition bias toward low complexity. Positions 196 to 212 (THTTLPKPSPSAGSTAS) are enriched in polar residues. 2 VWFA domains span residues 267-452 (DLSF…VKRV) and 469-638 (DIGF…VPKV). Residue Asn-494 is glycosylated (N-linked (GlcNAc...) asparagine).

As to quaternary structure, binds dermatan sulfate and chondroitin sulfate.

It is found in the secreted. The protein localises to the extracellular space. The protein resides in the extracellular matrix. Functionally, promotes matrix assembly and cell adhesiveness. Plays a role in spinal cord formation by regulating the proliferation and differentiation of neural stem cells. The chain is Vitrin (VIT) from Bos taurus (Bovine).